Reading from the N-terminus, the 137-residue chain is MLKRYLVLSVVTAAFSLPSLVYAAQQNILSVHILNQQTGKPAADVTVTLEKKADNGWLQLNTAKTDKDGRIKALWPEQTATTGDYRVVFKTGDYFKKQNLESFFPEIPVEFHINKVNEHYHVPLLLSQYGYSTYRGS.

The first 23 residues, 1-23, serve as a signal peptide directing secretion; sequence MLKRYLVLSVVTAAFSLPSLVYA. Substrate contacts are provided by His-32, Arg-70, and Tyr-134.

It belongs to the transthyretin family. 5-hydroxyisourate hydrolase subfamily. In terms of assembly, homotetramer.

The protein localises to the periplasm. The catalysed reaction is 5-hydroxyisourate + H2O = 5-hydroxy-2-oxo-4-ureido-2,5-dihydro-1H-imidazole-5-carboxylate + H(+). Functionally, catalyzes the hydrolysis of 5-hydroxyisourate (HIU) to 2-oxo-4-hydroxy-4-carboxy-5-ureidoimidazoline (OHCU). This is 5-hydroxyisourate hydrolase (hiuH) from Escherichia coli O157:H7.